Here is a 437-residue protein sequence, read N- to C-terminus: Type II methyltransferase M.HgiBI (437 aa).

The SAM-dependent MTase C5-type domain occupies 4-431 (FRFIDLFAGI…KALQCVKLFE (428 aa)). The active site involves cysteine 75.

Belongs to the class I-like SAM-binding methyltransferase superfamily. C5-methyltransferase family.

It catalyses the reaction a 2'-deoxycytidine in DNA + S-adenosyl-L-methionine = a 5-methyl-2'-deoxycytidine in DNA + S-adenosyl-L-homocysteine + H(+). A methylase that recognizes the double-stranded sequence 5'-GGWCC-3', methylates C-? on both strands, and protects the DNA from cleavage by the HgiBI endonuclease. This system is less active than isoschizomeric RM.HgiEI. This is Type II methyltransferase M.HgiBI from Herpetosiphon aurantiacus (Herpetosiphon giganteus).